Reading from the N-terminus, the 130-residue chain is Small ribosomal subunit protein uS9 (130 aa).

Belongs to the universal ribosomal protein uS9 family.

The chain is Small ribosomal subunit protein uS9 from Streptococcus gordonii (strain Challis / ATCC 35105 / BCRC 15272 / CH1 / DL1 / V288).